A 473-amino-acid polypeptide reads, in one-letter code: Ribulose bisphosphate carboxylase large chain (473 aa).

Residues 1 to 2 (MS) constitute a propeptide that is removed on maturation. P3 is subject to N-acetylproline. Position 14 is an N6,N6,N6-trimethyllysine (K14). Substrate is bound by residues N123 and T173. Catalysis depends on K175, which acts as the Proton acceptor. Residue K177 participates in substrate binding. Residues K201, D203, and E204 each contribute to the Mg(2+) site. K201 carries the post-translational modification N6-carboxylysine. H294 acts as the Proton acceptor in catalysis. 3 residues coordinate substrate: R295, H327, and S379.

The protein belongs to the RuBisCO large chain family. Type I subfamily. Heterohexadecamer of 8 large chains and 8 small chains; disulfide-linked. The disulfide link is formed within the large subunit homodimers. The cofactor is Mg(2+). The disulfide bond which can form in the large chain dimeric partners within the hexadecamer appears to be associated with oxidative stress and protein turnover.

It localises to the plastid. The protein resides in the chloroplast. It carries out the reaction 2 (2R)-3-phosphoglycerate + 2 H(+) = D-ribulose 1,5-bisphosphate + CO2 + H2O. The catalysed reaction is D-ribulose 1,5-bisphosphate + O2 = 2-phosphoglycolate + (2R)-3-phosphoglycerate + 2 H(+). RuBisCO catalyzes two reactions: the carboxylation of D-ribulose 1,5-bisphosphate, the primary event in carbon dioxide fixation, as well as the oxidative fragmentation of the pentose substrate in the photorespiration process. Both reactions occur simultaneously and in competition at the same active site. The protein is Ribulose bisphosphate carboxylase large chain of Monarda didyma (Scarlet bee-balm).